A 188-amino-acid polypeptide reads, in one-letter code: Pyridoxal 5'-phosphate synthase subunit PdxT (188 aa).

46–48 (GES) contributes to the L-glutamine binding site. C78 (nucleophile) is an active-site residue. L-glutamine contacts are provided by residues R106 and 132–133 (IR). Residues H169 and E171 each act as charge relay system in the active site.

Belongs to the glutaminase PdxT/SNO family. In terms of assembly, in the presence of PdxS, forms a dodecamer of heterodimers. Only shows activity in the heterodimer.

It catalyses the reaction aldehydo-D-ribose 5-phosphate + D-glyceraldehyde 3-phosphate + L-glutamine = pyridoxal 5'-phosphate + L-glutamate + phosphate + 3 H2O + H(+). The enzyme catalyses L-glutamine + H2O = L-glutamate + NH4(+). It functions in the pathway cofactor biosynthesis; pyridoxal 5'-phosphate biosynthesis. Its function is as follows. Catalyzes the hydrolysis of glutamine to glutamate and ammonia as part of the biosynthesis of pyridoxal 5'-phosphate. The resulting ammonia molecule is channeled to the active site of PdxS. In Tropheryma whipplei (strain TW08/27) (Whipple's bacillus), this protein is Pyridoxal 5'-phosphate synthase subunit PdxT.